The chain runs to 261 residues: Tryptophan synthase alpha chain (261 aa).

Residues E47 and D58 each act as proton acceptor in the active site.

This sequence belongs to the TrpA family. As to quaternary structure, tetramer of two alpha and two beta chains.

It carries out the reaction (1S,2R)-1-C-(indol-3-yl)glycerol 3-phosphate + L-serine = D-glyceraldehyde 3-phosphate + L-tryptophan + H2O. It participates in amino-acid biosynthesis; L-tryptophan biosynthesis; L-tryptophan from chorismate: step 5/5. In terms of biological role, the alpha subunit is responsible for the aldol cleavage of indoleglycerol phosphate to indole and glyceraldehyde 3-phosphate. This chain is Tryptophan synthase alpha chain, found in Neisseria meningitidis serogroup B (strain ATCC BAA-335 / MC58).